Here is a 229-residue protein sequence, read N- to C-terminus: NAD(P)H-quinone oxidoreductase subunit K, chloroplastic (229 aa).

Residues C43, C44, C108, and C139 each coordinate [4Fe-4S] cluster.

Belongs to the complex I 20 kDa subunit family. NDH is composed of at least 16 different subunits, 5 of which are encoded in the nucleus. [4Fe-4S] cluster serves as cofactor.

Its subcellular location is the plastid. It localises to the chloroplast thylakoid membrane. It carries out the reaction a plastoquinone + NADH + (n+1) H(+)(in) = a plastoquinol + NAD(+) + n H(+)(out). The enzyme catalyses a plastoquinone + NADPH + (n+1) H(+)(in) = a plastoquinol + NADP(+) + n H(+)(out). Its function is as follows. NDH shuttles electrons from NAD(P)H:plastoquinone, via FMN and iron-sulfur (Fe-S) centers, to quinones in the photosynthetic chain and possibly in a chloroplast respiratory chain. The immediate electron acceptor for the enzyme in this species is believed to be plastoquinone. Couples the redox reaction to proton translocation, and thus conserves the redox energy in a proton gradient. The polypeptide is NAD(P)H-quinone oxidoreductase subunit K, chloroplastic (Aethionema cordifolium (Lebanon stonecress)).